Consider the following 314-residue polypeptide: Putative S-adenosyl-L-methionine-dependent methyltransferase MAP_4191c (314 aa).

S-adenosyl-L-methionine is bound by residues aspartate 138 and 167–168 (DL).

This sequence belongs to the UPF0677 family.

Functionally, exhibits S-adenosyl-L-methionine-dependent methyltransferase activity. This chain is Putative S-adenosyl-L-methionine-dependent methyltransferase MAP_4191c, found in Mycolicibacterium paratuberculosis (strain ATCC BAA-968 / K-10) (Mycobacterium paratuberculosis).